Consider the following 259-residue polypeptide: Transmembrane protein 81 (259 aa).

The N-terminal stretch at 1–18 (MALSTLWLVLMLWTSLFS) is a signal peptide. The Extracellular segment spans residues 19–221 (DSQCSTLSQA…KVYSSSTIRN (203 aa)). One can recognise an Ig-like domain in the interval 97 to 172 (GRRLVLDCLE…VLDTGKRRVK (76 aa)). A disulfide bond links Cys-104 and Cys-161. Residues 222 to 242 (IVIISVPLSFAIAVVIFIFLF) form a helical membrane-spanning segment. The Cytoplasmic segment spans residues 243–259 (CYSRRARRAAHLCQDNI).

Forms a complex with izumo1 and spaca6 on spermatocyte cell membrane. The complex binds to oocyte protein bncr. In terms of tissue distribution, expressed in sperm.

It localises to the cell membrane. Functionally, essential fertilization factor required for male fertility. Part of a conserved trimeric sperm complex with the essential fertilization factors IZUMO1 and SPACA6 which bridges sperm and oocyte membranes during fertilization by binding to IZUMO1R/JUNO on the oocyte. This chain is Transmembrane protein 81, found in Danio rerio (Zebrafish).